The primary structure comprises 354 residues: MPGHLLQEEMTSSYTTTTTTITEPPSESLQKTVPLYLEEDIRPEMKEDIYDPSYQDEEGPPPKLEYVWRNIILMALLHLGALYGLVLVPSSKVYTLLWAFVYYVISIEGIGAGVHRLWSHRTYKARLPLRIFLIIANTMAFQNDVYEWARDHRAHHKFSETYADPHDSRRGFFFSHVGWLLVRKHPAVKEKGGKLDMSDLKAEKLVMFQRRYYKPAILLMCFILPTFVPWYFWGEAFVNSLCVSTFLRYTLVLNATWLVNSAAHLYGYRPYDKNIDPRENALVSLGCLGEGFHNYHHAFPYDYSASEYRWHINFTTFFIDCMAALGLAYDRKKVSKAAVLARIKRTGDGSCKSG.

A disordered region spans residues Met1–Ser28. At Met1–Val67 the chain is on the cytoplasmic side. Low complexity predominate over residues Glu8–Ser28. The chain crosses the membrane as a helical span at residues Trp68–Val88. Asn70 is a substrate binding site. Residues Pro89–Lys92 are Lumenal-facing. Residues Val93 to Gly113 form a helical membrane-spanning segment. Residues Val114 to Tyr212 are Cytoplasmic-facing. Residues His115 and His120 each coordinate Fe cation. Residues His115–His120 carry the Histidine box-1 motif. Substrate contacts are provided by Asn143, Arg150, and Asp151. His152, His155, and His156 together coordinate Fe cation. The Histidine box-2 signature appears at His152–His156. Substrate-binding residues include Arg183 and Lys184. Position 198 is a phosphoserine (Ser198). Residues Tyr213–Phe232 traverse the membrane as a helical segment. At Trp233–Ala236 the chain is on the lumenal side. The chain crosses the membrane as a helical span at residues Phe237–Leu258. Trp257 contacts substrate. Residues Val259–Gly354 are Cytoplasmic-facing. Fe cation is bound by residues His264, His293, His296, and His297. Positions His293–His297 match the Histidine box-3 motif.

Belongs to the fatty acid desaturase type 1 family. Requires Fe(2+) as cofactor.

Its subcellular location is the endoplasmic reticulum membrane. The enzyme catalyses octadecanoyl-CoA + 2 Fe(II)-[cytochrome b5] + O2 + 2 H(+) = (9Z)-octadecenoyl-CoA + 2 Fe(III)-[cytochrome b5] + 2 H2O. It catalyses the reaction hexadecanoyl-CoA + 2 Fe(II)-[cytochrome b5] + O2 + 2 H(+) = (9Z)-hexadecenoyl-CoA + 2 Fe(III)-[cytochrome b5] + 2 H2O. In terms of biological role, stearoyl-CoA desaturase that utilizes O(2) and electrons from reduced cytochrome b5 to introduce the first double bond into saturated fatty acyl-CoA substrates. Catalyzes the insertion of a cis double bond at the delta-9 position into fatty acyl-CoA substrates including palmitoyl-CoA and stearoyl-CoA. Gives rise to a mixture of 16:1 and 18:1 unsaturated fatty acids. Plays an important role in lipid biosynthesis. Plays an important role in regulating the expression of genes that are involved in lipogenesis and in regulating mitochondrial fatty acid oxidation. Plays an important role in body energy homeostasis. Contributes to the biosynthesis of membrane phospholipids, cholesterol esters and triglycerides. The sequence is that of Stearoyl-CoA desaturase (SCD) from Mesocricetus auratus (Golden hamster).